Consider the following 125-residue polypeptide: Small ribosomal subunit protein uS13 (125 aa).

Belongs to the universal ribosomal protein uS13 family. Part of the 30S ribosomal subunit. Forms a loose heterodimer with protein S19. Forms two bridges to the 50S subunit in the 70S ribosome.

Functionally, located at the top of the head of the 30S subunit, it contacts several helices of the 16S rRNA. In the 70S ribosome it contacts the 23S rRNA (bridge B1a) and protein L5 of the 50S subunit (bridge B1b), connecting the 2 subunits; these bridges are implicated in subunit movement. Contacts the tRNAs in the A and P-sites. This chain is Small ribosomal subunit protein uS13, found in Orientia tsutsugamushi (strain Ikeda) (Rickettsia tsutsugamushi).